Reading from the N-terminus, the 421-residue chain is Histone-lysine N-methyltransferase SUV39H1 (421 aa).

Positions 46 to 104 constitute a Chromo domain; that stretch reads FEVEYLWNYKKVQDQELYLVKWKYYPDSESTWEPRHHLKCNNLLKQFHLDLERELLRRA. The Pre-SET domain maps to 189 to 249; it reads AGCKCRDCFS…SCPNRVVQKG (61 aa). Residues C191, C193, C196, C203, C204, C231, C235, C237, and C241 each coordinate Zn(2+). The SET domain occupies 252-375; that stretch reads YKFCIFRTSD…TGEELTFDYN (124 aa). Residues 263 to 265, Y306, and 332 to 333 each bind S-adenosyl-L-methionine; these read RGW and NH. Residues C335, C409, C411, and C416 each coordinate Zn(2+). Positions 405–421 constitute a Post-SET domain; sequence VRVECKCGVSSCRKYLF.

This sequence belongs to the class V-like SAM-binding methyltransferase superfamily. Histone-lysine methyltransferase family. Suvar3-9 subfamily.

The protein localises to the nucleus. It localises to the chromosome. It is found in the centromere. It catalyses the reaction L-lysyl(9)-[histone H3] + 3 S-adenosyl-L-methionine = N(6),N(6),N(6)-trimethyl-L-lysyl(9)-[histone H3] + 3 S-adenosyl-L-homocysteine + 3 H(+). Functionally, histone methyltransferase that specifically trimethylates 'Lys-9' of histone H3 using monomethylated H3 'Lys-9' as substrate. H3 'Lys-9' trimethylation represents a specific tag for epigenetic transcriptional repression by recruiting HP1 (CBX1, CBX3 and/or CBX5) proteins to methylated histones. Mainly functions in heterochromatin regions, thereby playing a central role in the establishment of constitutive heterochromatin at pericentric and telomere regions. H3 'Lys-9' trimethylation is also required to direct DNA methylation at pericentric repeats. SUV39H1 is targeted to histone H3 via its interaction with RB1 and is involved in many processes. The sequence is that of Histone-lysine N-methyltransferase SUV39H1 (suv39h1) from Xenopus laevis (African clawed frog).